Here is an 83-residue protein sequence, read N- to C-terminus: Small ribosomal subunit protein bS16 (83 aa).

It belongs to the bacterial ribosomal protein bS16 family.

The sequence is that of Small ribosomal subunit protein bS16 from Acidovorax ebreus (strain TPSY) (Diaphorobacter sp. (strain TPSY)).